Consider the following 186-residue polypeptide: MKDKIIDNAITLFSEKGYDGTTLDDIAKSVNIKKASLYYHFDSKKSIYEQSVKCCFDYLNNIIMMNQNKSNYSIDALYQFLFEFIFDIEERYIRMYVQLSNTPEEFSGNIYGQIQDLNQSLSKEIAKFYDESKIKMTKEDFQNLILLFLESWYLKASFSQKFGAVEESKSQFKDEVYSLLNIFLKK.

Positions 1–59 constitute an HTH tetR-type domain; sequence MKDKIIDNAITLFSEKGYDGTTLDDIAKSVNIKKASLYYHFDSKKSIYEQSVKCCFDYL. The H-T-H motif DNA-binding region spans 22–41; the sequence is TLDDIAKSVNIKKASLYYHF.

In terms of assembly, homodimer.

Its function is as follows. Represses transcription of the icaADBC operon necessary for biofilm production. This is Biofilm operon icaADBC HTH-type negative transcriptional regulator IcaR (icaR) from Staphylococcus aureus (strain NCTC 8325 / PS 47).